Reading from the N-terminus, the 421-residue chain is D-amino acid dehydrogenase (421 aa).

Residue 3 to 17 participates in FAD binding; that stretch reads VLILGSGVIGVTSAY.

This sequence belongs to the DadA oxidoreductase family. FAD serves as cofactor.

It carries out the reaction a D-alpha-amino acid + A + H2O = a 2-oxocarboxylate + AH2 + NH4(+). In terms of biological role, oxidative deamination of D-amino acids. In Bradyrhizobium diazoefficiens (strain JCM 10833 / BCRC 13528 / IAM 13628 / NBRC 14792 / USDA 110), this protein is D-amino acid dehydrogenase.